Here is a 329-residue protein sequence, read N- to C-terminus: L-carnitine dehydrogenase (329 aa).

Residue 19-24 (GAGVIG) participates in NAD(+) binding.

The protein belongs to the 3-hydroxyacyl-CoA dehydrogenase family. L-carnitine dehydrogenase subfamily. In terms of assembly, homodimer.

Its subcellular location is the cytoplasm. The enzyme catalyses carnitine + NAD(+) = 3-dehydrocarnitine + NADH + H(+). It functions in the pathway amine and polyamine metabolism; carnitine metabolism. Its function is as follows. Catalyzes the NAD(+)-dependent oxidation of L-carnitine to 3-dehydrocarnitine. In Nocardiopsis dassonvillei (strain ATCC 23218 / DSM 43111 / CIP 107115 / JCM 7437 / KCTC 9190 / NBRC 14626 / NCTC 10488 / NRRL B-5397 / IMRU 509) (Actinomadura dassonvillei), this protein is L-carnitine dehydrogenase.